Here is a 369-residue protein sequence, read N- to C-terminus: Phenylalanine--tRNA ligase alpha subunit (369 aa).

Glu-269 contacts Mg(2+).

The protein belongs to the class-II aminoacyl-tRNA synthetase family. Phe-tRNA synthetase alpha subunit type 1 subfamily. As to quaternary structure, tetramer of two alpha and two beta subunits. Requires Mg(2+) as cofactor.

It localises to the cytoplasm. The enzyme catalyses tRNA(Phe) + L-phenylalanine + ATP = L-phenylalanyl-tRNA(Phe) + AMP + diphosphate + H(+). The polypeptide is Phenylalanine--tRNA ligase alpha subunit (Nitrobacter winogradskyi (strain ATCC 25391 / DSM 10237 / CIP 104748 / NCIMB 11846 / Nb-255)).